The primary structure comprises 78 residues: Nucleocapsid VP1 (78 aa).

Homodimer.

Its subcellular location is the virion. Functionally, completely wraps the viral circular dsDNA genome to form a nucleoprotein filament. These interactions between the viral genome and the nucleocapsid proteins probably maintain the DNA in A-form. This certainly protects the viral DNA under conditions such as the extreme desiccation of its host. This chain is Nucleocapsid VP1, found in Sulfolobus (SPV1).